Consider the following 217-residue polypeptide: Lipoprotein CseA (217 aa).

The signal sequence occupies residues 1-34 (MRGLGTESLRARGALKAAIAAVAGLAVLGLSVSA). C35 carries N-palmitoyl cysteine lipidation. C35 carries the S-diacylglycerol cysteine lipid modification. Disordered regions lie at residues 39 to 66 (GTGA…SPSK) and 192 to 217 (FSEE…PAPN).

It is found in the cell membrane. Functionally, may be involved in the stabilization of the cell envelope or may interact with the sensor protein CseC to modulate its activity, in response to cell envelope stress. This is Lipoprotein CseA (cseA) from Streptomyces avermitilis (strain ATCC 31267 / DSM 46492 / JCM 5070 / NBRC 14893 / NCIMB 12804 / NRRL 8165 / MA-4680).